We begin with the raw amino-acid sequence, 449 residues long: Hyaluronidase (449 aa).

The N-terminal stretch at 1-23 is a signal peptide; it reads MYHLWIKCLAAWIFLKRFNGVHV. 2 cysteine pairs are disulfide-bonded: C47/C340 and C211/C227. N-linked (GlcNAc...) asparagine glycosylation is found at N67 and N103. E135 (proton donor) is an active-site residue. N-linked (GlcNAc...) asparagine glycosylation occurs at N153. N357 carries N-linked (GlcNAc...) asparagine glycosylation. 3 disulfides stabilise this stretch: C365–C376, C370–C427, and C429–C438. A glycan (N-linked (GlcNAc...) asparagine) is linked at N401. The region spanning 427–438 is the EGF-like domain; sequence CQCYQGWQGLYC.

Belongs to the glycosyl hydrolase 56 family. As to quaternary structure, monomer. In terms of tissue distribution, expressed by the venom gland.

It is found in the secreted. It carries out the reaction Random hydrolysis of (1-&gt;4)-linkages between N-acetyl-beta-D-glucosamine and D-glucuronate residues in hyaluronate.. Functionally, snake venom endo-hyaluronidase that degrades hyaluronan to smaller oligosaccharide fragments. In venom, it is not toxic by itself, but increases the diffusion of other venom proteins by degrading the extracellular matrix. In addition, it displays antiedematogenic activity. The polypeptide is Hyaluronidase (Echis ocellatus (Ocellated saw-scaled viper)).